The sequence spans 160 residues: Large ribosomal subunit protein bL9 (160 aa).

This sequence belongs to the bacterial ribosomal protein bL9 family.

Functionally, binds to the 23S rRNA. This is Large ribosomal subunit protein bL9 from Neorickettsia sennetsu (strain ATCC VR-367 / Miyayama) (Ehrlichia sennetsu).